The chain runs to 398 residues: Beta-1,4-galactosyltransferase 1 (398 aa).

The Cytoplasmic segment spans residues 1–24 (MRLREPLLSGSAAMPGASLQRACR). A helical; Signal-anchor for type II membrane protein membrane pass occupies residues 25–44 (LLVAVCALHLGVTLVYYLAG). The Lumenal portion of the chain corresponds to 45–398 (RDLSRLPQLV…QITVDIGTPS (354 aa)). The span at 61–76 (QGGSNSAAAIGQSSGE) shows a compositional bias: polar residues. A disordered region spans residues 61-117 (QGGSNSAAAIGQSSGELRTGGARPPPPLGASSQPRPGGDSSPVVDSGPGPASNLTSV). Residue Asn113 is glycosylated (N-linked (GlcNAc...) asparagine). Residues Cys130 and Cys172 are joined by a disulfide bond. UDP-alpha-D-galactose contacts are provided by residues 183-187 (PFRNR), 222-224 (FNR), 249-250 (VD), and Trp310. The cysteines at positions 243 and 262 are disulfide-linked. Asp250 is a binding site for Mn(2+). 312–315 (GEDD) is an N-acetyl-D-glucosamine binding site. A Mn(2+)-binding site is contributed by His343. 343–346 (HSRD) contributes to the UDP-alpha-D-galactose binding site. Arg355 contributes to the N-acetyl-D-glucosamine binding site.

This sequence belongs to the glycosyltransferase 7 family. Homodimer; and heterodimer with alpha-lactalbumin to form lactose synthase. Interacts (via N-terminal cytoplasmic domain) with UBE2Q1 (via N-terminus); the interaction is direct. Requires Mn(2+) as cofactor. The soluble form derives from the membrane forms by proteolytic processing. Ubiquitously expressed, but at very low levels in fetal and adult brain.

It localises to the golgi apparatus. The protein resides in the golgi stack membrane. The protein localises to the cell membrane. It is found in the cell surface. Its subcellular location is the cell projection. It localises to the filopodium. The protein resides in the secreted. The catalysed reaction is D-glucose + UDP-alpha-D-galactose = lactose + UDP + H(+). It carries out the reaction an N-acetyl-beta-D-glucosaminyl derivative + UDP-alpha-D-galactose = a beta-D-galactosyl-(1-&gt;4)-N-acetyl-beta-D-glucosaminyl derivative + UDP + H(+). It catalyses the reaction N-acetyl-D-glucosamine + UDP-alpha-D-galactose = beta-D-galactosyl-(1-&gt;4)-N-acetyl-D-glucosamine + UDP + H(+). The enzyme catalyses a beta-D-GlcNAc-(1-&gt;3)-beta-D-Gal-(1-&gt;4)-beta-D-Glc-(1&lt;-&gt;1)-Cer(d18:1(4E)) + UDP-alpha-D-galactose = a neolactoside nLc4Cer(d18:1(4E)) + UDP + H(+). The catalysed reaction is a beta-D-glucosylceramide + UDP-alpha-D-galactose = a beta-D-galactosyl-(1-&gt;4)-beta-D-glucosyl-(1&lt;-&gt;1)-ceramide + UDP + H(+). It carries out the reaction a neolactoside IV(3)-beta-GlcNAc-nLc4Cer + UDP-alpha-D-galactose = a neolactoside nLc6Cer + UDP + H(+). It functions in the pathway protein modification; protein glycosylation. Functionally, the Golgi complex form catalyzes the production of lactose in the lactating mammary gland and could also be responsible for the synthesis of complex-type N-linked oligosaccharides in many glycoproteins as well as the carbohydrate moieties of glycolipids. In terms of biological role, the cell surface form functions as a recognition molecule during a variety of cell to cell and cell to matrix interactions, as those occurring during development and egg fertilization, by binding to specific oligosaccharide ligands on opposing cells or in the extracellular matrix. This Homo sapiens (Human) protein is Beta-1,4-galactosyltransferase 1.